A 273-amino-acid polypeptide reads, in one-letter code: ComE operon protein 4 (273 aa).

The protein belongs to the pyrroline-5-carboxylate reductase family.

In terms of biological role, dispensable for transformability. Not known if it can act as a pyrroline-5-carboxylate reductase. This Bacillus subtilis (strain 168) protein is ComE operon protein 4 (comER).